Here is a 226-residue protein sequence, read N- to C-terminus: Glutathione peroxidase 3 (226 aa).

Residues 1–24 (MARLLQASCLLSLLLAGFLPQSRG) form the signal peptide. Sec73 is a catalytic residue. A non-standard amino acid (selenocysteine) is located at residue Sec73.

It belongs to the glutathione peroxidase family. Homotetramer. In terms of tissue distribution, secreted in plasma.

It is found in the secreted. It carries out the reaction 2 glutathione + H2O2 = glutathione disulfide + 2 H2O. The enzyme catalyses tert-butyl hydroperoxide + 2 glutathione = tert-butanol + glutathione disulfide + H2O. Functionally, protects cells and enzymes from oxidative damage, by catalyzing the reduction of hydrogen peroxide, lipid peroxides and organic hydroperoxide, by glutathione. This is Glutathione peroxidase 3 from Sapajus apella (Brown-capped capuchin).